The following is a 123-amino-acid chain: Diacylglycerol kinase (123 aa).

A helical membrane pass occupies residues 15-32 (ILNATGYSLAGFLAAFRG). Glu-33 contacts a divalent metal cation. The next 3 membrane-spanning stretches (helical) occupy residues 35-55 (AFRQ…LLDV), 61-81 (ALMI…SAIE), and 102-122 (GSAA…TILL). Glu-74 (proton acceptor) is an active-site residue. Residue Glu-81 participates in a divalent metal cation binding.

The protein belongs to the bacterial diacylglycerol kinase family. It depends on Mg(2+) as a cofactor.

The protein resides in the cell inner membrane. The catalysed reaction is a 1,2-diacyl-sn-glycerol + ATP = a 1,2-diacyl-sn-glycero-3-phosphate + ADP + H(+). Its function is as follows. Catalyzes the ATP-dependent phosphorylation of sn-l,2-diacylglycerol (DAG) to phosphatidic acid. Involved in the recycling of diacylglycerol produced as a by-product during membrane-derived oligosaccharide (MDO) biosynthesis. The chain is Diacylglycerol kinase (dgkA) from Pseudomonas aeruginosa (strain ATCC 15692 / DSM 22644 / CIP 104116 / JCM 14847 / LMG 12228 / 1C / PRS 101 / PAO1).